Consider the following 389-residue polypeptide: Oxytocin receptor (389 aa).

Positions 1-27 (MEGELAANWSTEAVNSSAAPPGAEGNC) are disordered. At 1-38 (MEGELAANWSTEAVNSSAAPPGAEGNCTAGPPRRNEAL) the chain is on the extracellular side. Asn8, Asn15, and Asn26 each carry an N-linked (GlcNAc...) asparagine glycan. Residues 8 to 18 (NWSTEAVNSSA) are compositionally biased toward polar residues. The chain crosses the membrane as a helical span at residues 39 to 63 (ARVEVAVLCLILFLALSGNACVLLA). At 64–74 (LRTTRHKHSRL) the chain is on the cytoplasmic side. The chain crosses the membrane as a helical span at residues 75-97 (FFFMKHLSIADLVVAVFQVLPQL). At 98–113 (LWDITFRFYGPDLLCR) the chain is on the extracellular side. A disulfide bond links Cys112 and Cys187. A helical membrane pass occupies residues 114-135 (LVKYLQVVGMFASTYLLLLMSL). The Cytoplasmic segment spans residues 136–154 (DRCLAICQPLRSLRRRTDR). The helical transmembrane segment at 155-175 (LAVLATWLGCLVASAPQVHIF) threads the bilayer. Topologically, residues 176–202 (SLREVADGVFDCWAVFIQPWGPKAYIT) are extracellular. The helical transmembrane segment at 203 to 225 (WITLAVYIVPVIVLAACYGLISF) threads the bilayer. Topologically, residues 226 to 275 (KIWQNLRLKTAAAAAAEAPEGAAAGDGGRMALARVSSVKLISKAKIRTVK) are cytoplasmic. Residues 276-294 (MTFIIVLAFIVCWTPFFFV) form a helical membrane-spanning segment. The Extracellular segment spans residues 295–309 (QMWSVWDANAPKEAS). The helical transmembrane segment at 310–332 (AFIIVMLLASLNSCCNPWIYMLF) threads the bilayer. Topologically, residues 333–389 (TGHLFHELVQRFLCCSASYLKGNRLGETSTSKKSNSSSFVLSHRSSSQRSCSQPSTA) are cytoplasmic. The segment at 358–389 (GETSTSKKSNSSSFVLSHRSSSQRSCSQPSTA) is disordered. Low complexity predominate over residues 360–389 (TSTSKKSNSSSFVLSHRSSSQRSCSQPSTA). Phosphoserine occurs at positions 366 and 368.

This sequence belongs to the G-protein coupled receptor 1 family. Vasopressin/oxytocin receptor subfamily.

It is found in the cell membrane. In terms of biological role, receptor for oxytocin. The activity of this receptor is mediated by G proteins which activate a phosphatidylinositol-calcium second messenger system. This chain is Oxytocin receptor (OXTR), found in Macaca mulatta (Rhesus macaque).